Consider the following 83-residue polypeptide: Short neurotoxin B (83 aa).

Positions methionine 1–threonine 21 are cleaved as a signal peptide. 4 disulfides stabilise this stretch: cysteine 24/cysteine 45, cysteine 38/cysteine 62, cysteine 64/cysteine 75, and cysteine 76/cysteine 81.

It belongs to the three-finger toxin family. Short-chain subfamily. Type I alpha-neurotoxin sub-subfamily. As to expression, expressed by the venom gland.

The protein resides in the secreted. In terms of biological role, binds to muscle nicotinic acetylcholine receptor (nAChR) and inhibit acetylcholine from binding to the receptor, thereby impairing neuromuscular transmission. The chain is Short neurotoxin B from Laticauda laticaudata (Blue-ringed sea krait).